The following is a 663-amino-acid chain: UvrABC system protein B (663 aa).

In terms of domain architecture, Helicase ATP-binding spans 30-417 (EGIKAGKRHQ…TDKMVEQIIR (388 aa)). Residue 43–50 (GATGTGKT) participates in ATP binding. Residues 96–119 (YYDYYQPEAYVPSTDTFIEKDASI) carry the Beta-hairpin motif. Residues 434 to 600 (QIDDLLSEIQ…TINKKIHDLI (167 aa)) enclose the Helicase C-terminal domain. In terms of domain architecture, UVR spans 627-662 (QKTIDNIEKEMKQAAKDLDFEKATELRDMLFELKAE).

The protein belongs to the UvrB family. As to quaternary structure, forms a heterotetramer with UvrA during the search for lesions. Interacts with UvrC in an incision complex.

It is found in the cytoplasm. In terms of biological role, the UvrABC repair system catalyzes the recognition and processing of DNA lesions. A damage recognition complex composed of 2 UvrA and 2 UvrB subunits scans DNA for abnormalities. Upon binding of the UvrA(2)B(2) complex to a putative damaged site, the DNA wraps around one UvrB monomer. DNA wrap is dependent on ATP binding by UvrB and probably causes local melting of the DNA helix, facilitating insertion of UvrB beta-hairpin between the DNA strands. Then UvrB probes one DNA strand for the presence of a lesion. If a lesion is found the UvrA subunits dissociate and the UvrB-DNA preincision complex is formed. This complex is subsequently bound by UvrC and the second UvrB is released. If no lesion is found, the DNA wraps around the other UvrB subunit that will check the other stand for damage. This is UvrABC system protein B from Staphylococcus aureus (strain COL).